An 845-amino-acid chain; its full sequence is Probable inorganic carbon transporter subunit DabA (845 aa).

Residues 1–20 form a disordered region; the sequence is MPMASGDESMSARSENPVQS. The Zn(2+) site is built by Cys345, Asp347, His516, and Cys531.

Belongs to the inorganic carbon transporter (TC 9.A.2) DabA family. As to quaternary structure, forms a complex with DabB. The cofactor is Zn(2+).

Its subcellular location is the cell inner membrane. Part of an energy-coupled inorganic carbon pump. The chain is Probable inorganic carbon transporter subunit DabA from Azotobacter vinelandii (strain DJ / ATCC BAA-1303).